The primary structure comprises 251 residues: Large ribosomal subunit protein uL2 (251 aa).

A compositionally biased stretch (basic residues) spans 1–12 (MGKRLRVQRHGR). A disordered region spans residues 1–22 (MGKRLRVQRHGRGTPQWRNRGH).

The protein belongs to the universal ribosomal protein uL2 family. In terms of assembly, part of the 50S ribosomal subunit. Forms a bridge to the 30S subunit in the 70S ribosome.

One of the primary rRNA binding proteins. Required for association of the 30S and 50S subunits to form the 70S ribosome, for tRNA binding and peptide bond formation. It has been suggested to have peptidyltransferase activity; this is somewhat controversial. Makes several contacts with the 16S rRNA in the 70S ribosome. This chain is Large ribosomal subunit protein uL2, found in Ignicoccus hospitalis (strain KIN4/I / DSM 18386 / JCM 14125).